Reading from the N-terminus, the 372-residue chain is Fatty acid 2-hydroxylase (372 aa).

The 79-residue stretch at 8 to 86 (AASFSPSEVQ…LEQYYVGELR (79 aa)) folds into the Cytochrome b5 heme-binding domain. 2 residues coordinate heme: His-43 and His-69. The next 2 helical transmembrane spans lie at 168–188 (VWYSVPIIWVPLVLYLSWSYY) and 213–233 (SMFPGLFMLGIFLWSLIEYLI). The region spanning 219–361 (FMLGIFLWSL…TKLWDYCFHT (143 aa)) is the Fatty acid hydroxylase domain. 5 residues coordinate Zn(2+): His-234, His-239, His-257, His-260, and His-261. 2 helical membrane passes run 271-291 (VFPPVPASLVIGVFYLCLQLI) and 292-312 (LPEAVGGTVFAGGLLGYVLYD). Zn(2+) contacts are provided by His-315, His-319, His-336, His-339, and His-340.

The protein belongs to the sterol desaturase family. SCS7 subfamily. Zn(2+) serves as cofactor.

The protein resides in the endoplasmic reticulum membrane. The protein localises to the microsome membrane. The enzyme catalyses a 1,2-saturated fatty acid + 2 Fe(II)-[cytochrome b5] + O2 + 2 H(+) = a (R)-2-hydroxy fatty acid + 2 Fe(III)-[cytochrome b5] + H2O. The catalysed reaction is hexadecanoate + 2 Fe(II)-[cytochrome b5] + O2 + 2 H(+) = (R)-2-hydroxyhexadecanoate + 2 Fe(III)-[cytochrome b5] + H2O. It carries out the reaction octadecanoate + 2 Fe(II)-[cytochrome b5] + O2 + 2 H(+) = (R)-2-hydroxyoctadecanoate + 2 Fe(III)-[cytochrome b5] + H2O. It catalyses the reaction docosanoate + 2 Fe(II)-[cytochrome b5] + O2 + 2 H(+) = 2-hydroxydocosanoate + 2 Fe(III)-[cytochrome b5] + H2O. The enzyme catalyses tetracosanoate + 2 Fe(II)-[cytochrome b5] + O2 + 2 H(+) = (R)-2-hydroxytetracosanoate + 2 Fe(III)-[cytochrome b5] + H2O. It functions in the pathway lipid metabolism; fatty acid metabolism. It participates in sphingolipid metabolism; galactosylceramide biosynthesis. Catalyzes the hydroxylation of free fatty acids at the C-2 position to produce 2-hydroxy fatty acids, which are building blocks of sphingolipids and glycosphingolipids common in neural tissue and epidermis. FA2H is stereospecific for the production of (R)-2-hydroxy fatty acids. Plays an essential role in the synthesis of galactosphingolipids of the myelin sheath. Responsible for the synthesis of sphingolipids and glycosphingolipids involved in the formation of epidermal lamellar bodies critical for skin permeability barrier. Participates in the synthesis of glycosphingolipids and a fraction of type II wax diesters in sebaceous gland, specifically regulating hair follicle homeostasis. Involved in the synthesis of sphingolipids of plasma membrane rafts, controlling lipid raft mobility and trafficking of raft-associated proteins. The polypeptide is Fatty acid 2-hydroxylase (FA2H) (Macaca fascicularis (Crab-eating macaque)).